The primary structure comprises 886 residues: MHDAFEPVPILEKLPLQIDCLAAWEEWLLVGTKQGHLLLYRIRKDVVPADVASPESGSCNRFEVTLEKSNKNFSKKIQQIHVVSQFKILVSLLENNIYVHDLLTFQQITTVSKAKGASLFTCDLQHTETGEEVLRMCVAVRKKLQLYFWKDREFHELQGDFSVPDVPKSMAWCENSICVGFKRDYYLIRVDGKGSIKELFPTGKQLEPLVAPLADGKVAVGQDDLTVVLNEEGICTQKCALNWTDIPVAMEHQPPYIVAVLPRYVEIRTLEPRLLVQSIELQRPRFITSGGSNIIYVASNHFVWRLIPVPMATQIQQLLQDKQFELALQLAEMKDDSDSEKQQQIHHIKNLYAFNLFCQKRFDESMQVFAKLGTDPTHVMGLYPDLLPTDYRKQLQYPNPLPTLSGAELEKAHLALIDYLTQKRSQLVKKLNDSDHQSSTSPLMEGTPTIKSKKKLLQIIDTTLLKCYLHTNVALVAPLLRLENNHCHIEESEHVLKKAHKYSELIILYEKKGLHEKALQVLVDQSKKANSPLKGHERTVQYLQHLGTENLHLIFSYSVWVLRDFPEDGLKIFTEDLPEVESLPRDRVLNFLIENFKALAIPYLEHIIHVWEETGSQFHNCLIQLYCEKVQSLMKDYLLSLPTGKSPVPAGEEGGELGEYRQKLLMFLEISSHYDPGRLICDFPFDGLLEERALLLGRMGKHEQALFIYVHVLKDTKMAKEYCHKHYDQNKEGNKDVYLSLLRMYLSPPSIHCLGPIKLELLEPQANLQAALQVLELHYSKLDTTKAINLLPANTQINDIRIFLEKVLEENAQKKRFNQVLKNLLHAEFLRVQEERILHQQVKCIITEEKVCMVCKKKIGNSAFARYPNGVVVHYFCSKEVNSADT.

Residues 15 to 294 form the CNH domain; the sequence is PLQIDCLAAW…RFITSGGSNI (280 aa). Residues 573–750 form a CHCR repeat; that stretch reads FTEDLPEVES…LLRMYLSPPS (178 aa).

This sequence belongs to the VAM6/VPS39 family. In terms of assembly, homooligomer. Interacts with TGFBR2 and, less efficiently, with TGFBR1; interaction with TGFBR2 is independent of the receptor kinase activity and of the presence of TGF-beta. Also interacts with ACVR2B, but not with BMPR2. Interacts with SMAD4, preferentially following TGF-beta treatment. Component of the putative homotypic fusion and vacuole protein sorting (HOPS) complex; the core of which composed of the class C Vps proteins VPS11, VPS16, VPS18 and VPS33A, is associated with VPS39 and VPS41. Interacts with PLEKHM2; involved in VPS39 recruitment to ARL8B-containing lysosomes. Associates with adapter protein complex 3 (AP-3) and clathrin:AP-3 complexes. Interacts with STX17; this interaction is increased in the absence of TMEM39A. Interacts with RAB7, RAB2A and RAB2B. Interacts with RAB2A (GTP-bound); the interaction contributes to obtaining a functional HOPS complex that promotes autophagosome-lysosome membrane fusion driven by STX17-SNAP29-VAMP8. Interacts with RAB39A (GTP-bound) and RAB39B (GTP-bound); interaction with RAB39A contributes to obtaining a functional HOPS complex.

The protein resides in the cytoplasm. It is found in the lysosome membrane. Its subcellular location is the late endosome membrane. Functionally, regulator of TGF-beta/activin signaling, inhibiting SMAD3- and activating SMAD2-dependent transcription. Acts by interfering with SMAD3/SMAD4 complex formation, this would lead to inhibition of SMAD3-dependent transcription and relieve SMAD3 inhibition of SMAD2-dependent promoters, thus increasing SMAD2-dependent transcription. Its function is as follows. Plays a role in vesicle-mediated protein trafficking to lysosomal compartments including the endocytic membrane transport and autophagic pathways. Acts as a component of the HOPS endosomal tethering complex which is proposed to be involved in the Rab5-to-Rab7 endosome conversion probably implicating MON1A/B, and via binding SNAREs and SNARE complexes to mediate tethering and docking events during SNARE-mediated membrane fusion. The HOPS complex is proposed to be recruited to Rab7 on the late endosomal membrane and to regulate late endocytic, phagocytic and autophagic traffic towards lysosomes. Involved in homotypic vesicle fusions between late endosomes and in heterotypic fusions between late endosomes and lysosomes. Required for fusion of endosomes and autophagosomes with lysosomes. This chain is Vam6/Vps39-like protein, found in Mus musculus (Mouse).